The primary structure comprises 349 residues: D-alanine--D-alanine ligase (349 aa).

One can recognise an ATP-grasp domain in the interval 133–335 (QVLESATTIP…YSVLIEELVS (203 aa)). 163–218 (EEKLIYPVFVKPANMGSSVGISKAENRTDLKQAIALALKYDSRVLIEQGVDAREIE) contacts ATP. Mg(2+)-binding residues include D289, E302, and N304.

This sequence belongs to the D-alanine--D-alanine ligase family. It depends on Mg(2+) as a cofactor. Mn(2+) is required as a cofactor.

The protein localises to the cytoplasm. It catalyses the reaction 2 D-alanine + ATP = D-alanyl-D-alanine + ADP + phosphate + H(+). It participates in cell wall biogenesis; peptidoglycan biosynthesis. Functionally, cell wall formation. This chain is D-alanine--D-alanine ligase, found in Streptococcus mutans serotype c (strain ATCC 700610 / UA159).